The following is a 664-amino-acid chain: Intraflagellar transport protein 70A1 (664 aa).

TPR repeat units follow at residues 11–44, 45–78, 153–186, 188–220, 393–423, 424–456, and 458–491; these read DGEF…SSRS, RAGL…HPEL, PDGL…SGYQ, DLSY…GIRQ, TKQV…EKYI, PVLM…CNDH, and VWKL…NYDN. A coiled-coil region spans residues 507 to 534; sequence YIMTSQNEEAEELMRKIEKEEEQLSYGD. The TPR 8 repeat unit spans residues 543–576; that stretch reads CIVNLVIGTLYCAKGNYDFGISRVIKSLEPYHKK.

The protein belongs to the TTC30/dfy-1/fleer family. As to quaternary structure, interacts wit the IFT B complex component IFT52.

It is found in the cell projection. It localises to the cilium. In terms of biological role, required for polyglutamylation of axonemal tubulin. Plays a role in anterograde intraflagellar transport (IFT), the process by which cilia precursors are transported from the base of the cilium to the site of their incorporation at the tip. The chain is Intraflagellar transport protein 70A1 (Ift70a1) from Mus musculus (Mouse).